The following is a 487-amino-acid chain: Serine/threonine-protein kinase 4 (487 aa).

Position 1 is an N-acetylmethionine (Met1). Thr3 carries the phosphothreonine modification. In terms of domain architecture, Protein kinase spans 30–281; sequence FDVLEKLGEG…ATQLLQHPFV (252 aa). ATP contacts are provided by residues 36 to 44 and Lys59; that span reads LGEGSYGSV. The active-site Proton acceptor is Asp149. Phosphothreonine; by autocatalysis is present on Thr183. Position 265 is a phosphoserine (Ser265). Residues 290 to 310 are a coiled coil; it reads LRDLINEAMDVKLKRQESQQR. Positions 303 to 312 are enriched in basic and acidic residues; sequence KRQESQQREV. The interval 303–332 is disordered; sequence KRQESQQREVDQDDEENSEEDEMDSGTMVR. A compositionally biased stretch (acidic residues) spans 313-326; that stretch reads DQDDEENSEEDEMD. Phosphoserine is present on Ser320. Residues Thr340 and Thr367 each carry the phosphothreonine modification. Thr387 carries the post-translational modification Phosphothreonine; by PKB/AKT1. Phosphoserine is present on residues Ser410 and Ser414. Tyr433 is modified (phosphotyrosine). The SARAH domain maps to 433–480; the sequence is YEFLKSWTVEDLQKRLLALDPMMEQEIEEIRQKYQSKRQPILDAIEAK.

The protein belongs to the protein kinase superfamily. STE Ser/Thr protein kinase family. STE20 subfamily. As to quaternary structure, homodimer; mediated via the coiled-coil region. Interacts with NORE1, which inhibits autoactivation. Interacts with and stabilizes SAV1. Interacts with RASSF1. Interacts with FOXO3. Interacts with RASSF2 (via SARAH domain). Interacts with AR, PKB/AKT1, TNNI3 and SIRT1. Interacts with DLG5 (via PDZ domain 3). Interacts with MARK3 and SCRIB in the presence of DLG5. Mg(2+) is required as a cofactor. Post-translationally, autophosphorylated on serine and threonine residues. Phosphorylation at Thr-387 by PKB/AKT1, leads to inhibition of its: kinase activity, nuclear translocation and autophosphorylation at Thr-183. It also diminishes its cleavage by caspases and its ability to phosphorylate FOXO3. Proteolytically cleaved by caspase-3 during apoptosis at Asp-326 and Asp-349 resulting in a 37 kDa or a 39 kDa subunit respectively. The 39 kDa subunit is further cleaved into the 37 kDa form. Proteolytic cleavage results in kinase activation and nuclear translocation of the truncated form (MST1/N). It is less likely that cleavage at Asp-349 is a prerequisite for activation as this site is not conserved in the murine ortholog.

The protein resides in the cytoplasm. The protein localises to the nucleus. The catalysed reaction is L-seryl-[protein] + ATP = O-phospho-L-seryl-[protein] + ADP + H(+). The enzyme catalyses L-threonyl-[protein] + ATP = O-phospho-L-threonyl-[protein] + ADP + H(+). Inhibited by the C-terminal non-catalytic region. Activated by caspase-cleavage. Full activation also requires homodimerization and autophosphorylation of Thr-183. Activated by RASSF1 which acts by preventing its dephosphorylation. Its function is as follows. Stress-activated, pro-apoptotic kinase which, following caspase-cleavage, enters the nucleus and induces chromatin condensation followed by internucleosomal DNA fragmentation. Key component of the Hippo signaling pathway which plays a pivotal role in organ size control and tumor suppression by restricting proliferation and promoting apoptosis. The core of this pathway is composed of a kinase cascade wherein STK3/MST2 and STK4/MST1, in complex with its regulatory protein SAV1, phosphorylates and activates LATS1/2 in complex with its regulatory protein MOB1, which in turn phosphorylates and inactivates YAP1 oncoprotein and WWTR1/TAZ. Phosphorylation of YAP1 by LATS2 inhibits its translocation into the nucleus to regulate cellular genes important for cell proliferation, cell death, and cell migration. STK3/MST2 and STK4/MST1 are required to repress proliferation of mature hepatocytes, to prevent activation of facultative adult liver stem cells (oval cells), and to inhibit tumor formation. Phosphorylates 'Ser-14' of histone H2B (H2BS14ph) during apoptosis. Phosphorylates FOXO3 upon oxidative stress, which results in its nuclear translocation and cell death initiation. Phosphorylates MOBKL1A, MOBKL1B and RASSF2. Phosphorylates TNNI3 (cardiac Tn-I) and alters its binding affinity to TNNC1 (cardiac Tn-C) and TNNT2 (cardiac Tn-T). Phosphorylates FOXO1 on 'Ser-212' and regulates its activation and stimulates transcription of PMAIP1 in a FOXO1-dependent manner. Phosphorylates SIRT1 and inhibits SIRT1-mediated p53/TP53 deacetylation, thereby promoting p53/TP53 dependent transcription and apoptosis upon DNA damage. Acts as an inhibitor of PKB/AKT1. Phosphorylates AR on 'Ser-650' and suppresses its activity by intersecting with PKB/AKT1 signaling and antagonizing formation of AR-chromatin complexes. This Aotus nancymaae (Ma's night monkey) protein is Serine/threonine-protein kinase 4 (STK4).